We begin with the raw amino-acid sequence, 602 residues long: MNHIRNFSIIAHIDHGKSTLADRLIQRCGGLADRDMEAQVLDSMDIEKERGITIKAQTAALQYKAKDGQVYNLNLIDTPGHVDFSYEVSRSLSACEGALLVVDASQGVEAQTVANCYTALELGVEVTAVLNKMDLPQADPENARAEIEDVIGIDASDAIPCSAKTGMGIEEILEAVVAKVPPPKGDPNGQLRAMIIDSWFDTYVGVVMLVRVVDGELKRGERFKMMASGAAYEANNLGVFTPADVPRDVLRAGEVGYIIAGIKELKAAKVGDTITLEKKLPNNLGPATEALPGFKEIKPQVFAGLYPTEASEYDQLRDALEKLQLNDSSLQFEPEVSQALGFGFRCGFLGLLHMEIVQERLEREFDQDLITTAPSVVYEVVKGDGEVIQVENPSKMPDAGRIEEVREPIVTVHLYMPQDYVGPVMTLANQKRGVQINMQYHGRQVMLTYEMPLGEIVLDFFDKLKSVSRGYASMDYEFKEYRASDVVKVDILLNGEKVDALSIIVHRSQATYRGRAVVAKMREIISRQMFDVAIQAAIGANIIARETVKAMRKNVLAKCYGGDITRKRKLLEKQKAGKKRMKQIGSVEVPQEAFLAILQVED.

One can recognise a tr-type G domain in the interval 2 to 184; sequence NHIRNFSIIA…AVVAKVPPPK (183 aa). Residues 14 to 19 and 131 to 134 contribute to the GTP site; these read DHGKST and NKMD.

This sequence belongs to the TRAFAC class translation factor GTPase superfamily. Classic translation factor GTPase family. LepA subfamily.

Its subcellular location is the cell inner membrane. It carries out the reaction GTP + H2O = GDP + phosphate + H(+). Required for accurate and efficient protein synthesis under certain stress conditions. May act as a fidelity factor of the translation reaction, by catalyzing a one-codon backward translocation of tRNAs on improperly translocated ribosomes. Back-translocation proceeds from a post-translocation (POST) complex to a pre-translocation (PRE) complex, thus giving elongation factor G a second chance to translocate the tRNAs correctly. Binds to ribosomes in a GTP-dependent manner. The chain is Elongation factor 4 from Delftia acidovorans (strain DSM 14801 / SPH-1).